A 171-amino-acid polypeptide reads, in one-letter code: Small ribosomal subunit protein mS25 (171 aa).

It belongs to the mitochondrion-specific ribosomal protein mS25 family. Component of the mitochondrial ribosome small subunit (28S) which comprises a 12S rRNA and about 30 distinct proteins.

The protein resides in the mitochondrion. The sequence is that of Small ribosomal subunit protein mS25 (Mrps25) from Rattus norvegicus (Rat).